The primary structure comprises 141 residues: Anthrone oxygenase ptaC (141 aa).

The first 19 residues, 1 to 19, serve as a signal peptide directing secretion; the sequence is MMGLPLMAVPMLLDTGADP. 2 helical membrane passes run 33–53 and 64–84; these read GVRTMPPLAITTFILYVWTII and ILAVAAVVTMGMIPFTWYVLA.

It belongs to the anthrone oxygenase family.

Its subcellular location is the membrane. The protein operates within secondary metabolite biosynthesis. In terms of biological role, anthrone oxygenase; part of the gene cluster that mediates the biosynthesis of pestheic acid, a diphenyl ether which is a biosynthetic precursor of the unique chloropupukeananes. The biosynthesis initiates from condensation of acetate and malonate units catalyzed by the non-reducing PKS ptaA. As the ptaA protein is TE/CLC domain-deficient, hydrolysis and Claisen cyclization of the polyketide could be catalyzed by ptaB containing a beta-lactamase domain. The ptaB protein might hydrolyze the thioester bond between the ACP of ptaA and the intermediate to release atrochrysone carboxylic acid, which is spontaneously dehydrated to form endocrocin anthrone. Endocrocin anthrone is then converted to endocrocin, catalyzed by the anthrone oxygenase ptaC. Spontaneous decarboxylation of endocrocin occurs to generate emodin. An O-methyltransferase (ptaH or ptaI) could methylate emodin to form physcion. PtaJ could then catalyze the oxidative cleavage of physcion, and rotation of the intermediate could then afford desmethylisosulochrin. PtaF, a putative NADH-dependent oxidoreductase, might also participate in the oxidative cleavage step. Desmethylisosulochrin is then transformed by another O-methyltransferase (ptaH or ptaI) to form isosulochrin. Chlorination of isosulochrin by ptaM in the cyclohexadienone B ring then produces chloroisosulochrin. PtaE is responsible for the oxidative coupling reactions of both benzophenones isosulochrin and chloroisosulochrin to RES-1214-1 and pestheic acid respectively, regardless of chlorination. This Pestalotiopsis fici (strain W106-1 / CGMCC3.15140) protein is Anthrone oxygenase ptaC.